We begin with the raw amino-acid sequence, 54 residues long: uncharacterized protein (54 aa).

Over residues 1–28 (MDRKKDEIQRKYREQMREKKEREKEDGS) the composition is skewed to basic and acidic residues. A disordered region spans residues 1–29 (MDRKKDEIQRKYREQMREKKEREKEDGSS). Residues 31-51 (TFEIVVVLAIIILMFFFNSVF) traverse the membrane as a helical segment.

Its subcellular location is the cell membrane. This is an uncharacterized protein from Bacillus subtilis (strain 168).